We begin with the raw amino-acid sequence, 3122 residues long: Laminin subunit alpha-2 (3122 aa).

The N-terminal stretch at 1-22 (MPGAAGVLLLLLLSGGLGGVQA) is a signal peptide. Residues 35 to 286 (QQRGLFPAVL…SVKDISVGGM (252 aa)) enclose the Laminin N-terminal domain. N55 and N89 each carry an N-linked (GlcNAc...) asparagine glycan. 6 cysteine pairs are disulfide-bonded: C287/C296, C289/C307, C309/C318, C321/C341, C344/C353, and C346/C378. Laminin EGF-like domains follow at residues 287–343 (CICY…ECEA), 344–413 (CNCH…PCQP), 414–468 (CHCD…DCKA), and 469–517 (CNCS…GCDE). N-linked (GlcNAc...) asparagine glycosylation is present at N303. N-linked (GlcNAc...) asparagine glycosylation is found at N363 and N380. Cystine bridges form between C381–C390, C393–C411, C414–C426, C416–C442, C444–C453, C456–C466, C469–C482, C471–C486, C488–C497, and C500–C515. N470 carries an N-linked (GlcNAc...) asparagine glycan. A Laminin EGF-like 5; first part domain is found at 518 to 527 (CFCSGVSNRC). The 193-residue stretch at 531-723 (YWTYGKIQDM…DGSIAAAVEV (193 aa)) folds into the Laminin IV type A 1 domain. Positions 724-756 (CQCPPGYTGSSCESCWPRHRRVNGTIFGGICEP) constitute a Laminin EGF-like 5; second part domain. N746 carries an N-linked (GlcNAc...) asparagine glycan. 32 disulfide bridges follow: C757–C766, C759–C773, C776–C785, C788–C804, C807–C822, C809–C832, C835–C844, C847–C862, C865–C879, C867–C886, C889–C898, C901–C915, C918–C930, C920–C937, C939–C948, C951–C964, C967–C979, C969–C985, C987–C996, C999–C1011, C1014–C1023, C1016–C1030, C1032–C1041, C1044–C1057, C1060–C1072, C1062–C1079, C1081–C1090, C1093–C1103, C1106–C1118, C1108–C1134, C1136–C1145, and C1148–C1163. Laminin EGF-like domains lie at 757–806 (CQCF…DCQP), 807–864 (CACP…SCQP), 865–917 (CQCN…NCQP), 918–966 (CRCN…GCVP), 967–1013 (CNCN…GCTA), 1014–1059 (CECS…GCKA), 1060–1105 (CNCS…RCNL), and 1106–1165 (CDCF…GCSS). A glycan (N-linked (GlcNAc...) asparagine) is linked at N1061. Residues 1166-1175 (CYCFGTTTQC) form the Laminin EGF-like 14; first part domain. In terms of domain architecture, Laminin IV type A 2 spans 1176 to 1379 (SEAKGLIRTW…MTPPADLIEK (204 aa)). One can recognise a Laminin EGF-like 14; second part domain in the interval 1380 to 1419 (CDCPLGYSGLSCEACLPGFYRLRSQPGGRTPGPTLGTCVP). Cystine bridges form between C1420–C1429, C1422–C1436, C1439–C1448, C1451–C1466, C1469–C1484, C1471–C1494, C1497–C1506, C1509–C1524, C1527–C1539, C1529–C1546, C1548–C1557, and C1560–C1571. Laminin EGF-like domains are found at residues 1420 to 1468 (CQCN…DCQQ), 1469 to 1526 (CACP…SCQE), and 1527 to 1573 (CECD…ECVF). The domain II and I stretch occupies residues 1574–2144 (CGDECTGLLL…NQARKQANSI (571 aa)). N1597, N1614, N1700, N1810, N1901, N1916, N1920, N2017, N2028, N2045, N2126, and N2240 each carry an N-linked (GlcNAc...) asparagine glycan. Residues 1630–2150 (ERLIQLAEGN…ANSIKVSVSS (521 aa)) are a coiled coil. Laminin G-like domains follow at residues 2145–2328 (KVSV…CKGC), 2340–2521 (TIQF…TKGC), 2526–2710 (VYTV…IGRC), 2763–2934 (SKQF…VGTC), and 2939–3110 (QRGT…KALE). The cysteines at positions 2302 and 2328 are disulfide-linked. Residues N2360, N2435, and N2478 are each glycosylated (N-linked (GlcNAc...) asparagine). A disulfide bridge links C2495 with C2521. 3 N-linked (GlcNAc...) asparagine glycosylation sites follow: N2551, N2558, and N2648. The cysteines at positions 2683 and 2710 are disulfide-linked. Residues N2868 and N2893 are each glycosylated (N-linked (GlcNAc...) asparagine). An intrachain disulfide couples C2909 to C2934. Positions 3043–3060 (GNQVEAQSPNPASTSADT) are enriched in polar residues. The disordered stretch occupies residues 3043–3063 (GNQVEAQSPNPASTSADTNDP).

In terms of assembly, laminin is a complex glycoprotein, consisting of three different polypeptide chains (alpha, beta, gamma), which are bound to each other by disulfide bonds into a cross-shaped molecule comprising one long and three short arms with globules at each end. Alpha-2 is a subunit of laminin-2 (laminin-211 or merosin), laminin-4 (laminin-221 or S-merosin) and laminin-12 (laminin-213). Interacts with FBLN1, FBLN2 and NID2. As to expression, placenta, striated muscle, peripheral nerve, cardiac muscle, pancreas, lung, spleen, kidney, adrenal gland, skin, testis, meninges, choroid plexus, and some other regions of the brain; not in liver, thymus and bone.

Its subcellular location is the secreted. It localises to the extracellular space. The protein localises to the extracellular matrix. The protein resides in the basement membrane. In terms of biological role, binding to cells via a high affinity receptor, laminin is thought to mediate the attachment, migration and organization of cells into tissues during embryonic development by interacting with other extracellular matrix components. The polypeptide is Laminin subunit alpha-2 (LAMA2) (Homo sapiens (Human)).